Here is a 56-residue protein sequence, read N- to C-terminus: Large ribosomal subunit protein eL24 (56 aa).

Zn(2+) contacts are provided by C6, C9, C32, and C36. Residues 6 to 36 (CSFCNTRITPGTGKLYAKKDGTVYYFCSSKC) form a C4-type zinc finger.

The protein belongs to the eukaryotic ribosomal protein eL24 family. Part of the 50S ribosomal subunit. Forms a cluster with proteins L3 and L14. It depends on Zn(2+) as a cofactor.

Functionally, binds to the 23S rRNA. In Methanothrix thermoacetophila (strain DSM 6194 / JCM 14653 / NBRC 101360 / PT) (Methanosaeta thermophila), this protein is Large ribosomal subunit protein eL24.